The primary structure comprises 60 residues: ATP synthase subunit J, mitochondrial (60 aa).

The chain crosses the membrane as a helical span at residues 13-32 (ILKPMLPFFLGGAIVFYGTV).

The protein belongs to the ATPase j subunit family. In terms of assembly, F-type ATPases have 2 components, CF(1) - the catalytic core - and CF(0) - the membrane proton channel. In yeast, the dimeric form of ATP synthase consists of 17 polypeptides: alpha, beta, gamma, delta, epsilon, 4 (B), 5 (OSCP), 6 (A), 8, 9 (C), d, E (Tim11), f, g, h, i/j and k.

It localises to the mitochondrion membrane. Its function is as follows. Mitochondrial membrane ATP synthase (F(1)F(0) ATP synthase or Complex V) produces ATP from ADP in the presence of a proton gradient across the membrane which is generated by electron transport complexes of the respiratory chain. F-type ATPases consist of two structural domains, F(1) - containing the extramembraneous catalytic core and F(0) - containing the membrane proton channel, linked together by a central stalk and a peripheral stalk. During catalysis, ATP synthesis in the catalytic domain of F(1) is coupled via a rotary mechanism of the central stalk subunits to proton translocation. Part of the complex F(0) domain. Minor subunit located with subunit a in the membrane. The chain is ATP synthase subunit J, mitochondrial (atp18) from Schizosaccharomyces pombe (strain 972 / ATCC 24843) (Fission yeast).